Consider the following 256-residue polypeptide: Biosynthetic peptidoglycan transglycosylase (256 aa).

The helical transmembrane segment at 26–48 (VARWLAYVGGVFAGAWLATQLYY) threads the bilayer.

The protein belongs to the glycosyltransferase 51 family.

Its subcellular location is the cell inner membrane. The catalysed reaction is [GlcNAc-(1-&gt;4)-Mur2Ac(oyl-L-Ala-gamma-D-Glu-L-Lys-D-Ala-D-Ala)](n)-di-trans,octa-cis-undecaprenyl diphosphate + beta-D-GlcNAc-(1-&gt;4)-Mur2Ac(oyl-L-Ala-gamma-D-Glu-L-Lys-D-Ala-D-Ala)-di-trans,octa-cis-undecaprenyl diphosphate = [GlcNAc-(1-&gt;4)-Mur2Ac(oyl-L-Ala-gamma-D-Glu-L-Lys-D-Ala-D-Ala)](n+1)-di-trans,octa-cis-undecaprenyl diphosphate + di-trans,octa-cis-undecaprenyl diphosphate + H(+). It functions in the pathway cell wall biogenesis; peptidoglycan biosynthesis. Its function is as follows. Peptidoglycan polymerase that catalyzes glycan chain elongation from lipid-linked precursors. The chain is Biosynthetic peptidoglycan transglycosylase from Burkholderia pseudomallei (strain K96243).